A 546-amino-acid polypeptide reads, in one-letter code: ATP-dependent rRNA helicase RRP3 (546 aa).

Residues 1–108 (MSDFKRRKLE…DEEAEAQAAA (108 aa)) are disordered. Acidic residues-rich tracts occupy residues 60 to 77 (SEED…EEED) and 94 to 103 (EAEQSDEEAE). The Q motif motif lies at 115-143 (KTFADLGVREELCDACENLGYKTATPIQT). In terms of domain architecture, Helicase ATP-binding spans 146-318 (IPLALAGKDI…RAALKNPVRV (173 aa)). 159–166 (AETGSGKT) is a binding site for ATP. The DEAD box motif lies at 265–268 (DEAD). A Helicase C-terminal domain is found at 342-490 (YKDLYLIHLL…EEKVSRDEVM (149 aa)). A compositionally biased stretch (basic and acidic residues) spans 504 to 515 (VREMKDLHDQRK). A disordered region spans residues 504–546 (VREMKDLHDQRKSGRGGRGGGRGGGRGGRGRGGRRDNMDMDEG). Over residues 519-530 (GGRGGGRGGGRG) the composition is skewed to gly residues. Over residues 536–546 (GRRDNMDMDEG) the composition is skewed to basic and acidic residues.

The protein belongs to the DEAD box helicase family. DDX47/RRP3 subfamily. Interacts with the SSU processome.

The protein resides in the nucleus. The catalysed reaction is ATP + H2O = ADP + phosphate + H(+). Functionally, ATP-dependent rRNA helicase required for pre-ribosomal RNA processing. Involved in the maturation of the 35S-pre-rRNA and to its cleavage to mature 18S rRNA. This Phaeosphaeria nodorum (strain SN15 / ATCC MYA-4574 / FGSC 10173) (Glume blotch fungus) protein is ATP-dependent rRNA helicase RRP3.